Consider the following 39-residue polypeptide: Mu-theraphotoxin-Ae1a (39 aa).

3 cysteine pairs are disulfide-bonded: Cys7-Cys21, Cys14-Cys26, and Cys20-Cys33. Phe39 carries the phenylalanine amide modification.

Belongs to the neurotoxin 10 (Hwtx-1) family. 47 subfamily. Expressed by the venom gland.

It localises to the secreted. In terms of biological role, insecticidal toxin that acts, at least partially, by inhibiting insect voltage-gated sodium (NaV) channels of several insect species. The toxin binds to the voltage sensor in NaV channel domain II and inhibits channel opening by shifting the threshold for channel activation to more positive voltages. The toxin binding is sensitive to residues in the S1-S2 loop of the domain II voltage sensor. In vivo, the recombinant toxin causes paralysis and/or death to two dipteran species (Lucilia cuprina and Drosophila melanogaster). In contrast, the toxin does not show paralytic or lethal effect on the cotton bollworm Helicoverpa armigera and the triatomine bug Rhodinius prolixus. The chain is Mu-theraphotoxin-Ae1a from Augacephalus ezendami (Mozambique baboon spider).